The chain runs to 243 residues: MKIIGIIQARTGSKRLKNKVLLKLGDRCILEILLERLKKSKKLDDIIVATTIKKEDNAIVELCNSLGVNVFRGSEKDVLDRFYNASKFYSGDVIVRITGDNPLTSIELIDKQVEYLLKNNFDYVSTKNIILGLSSEVFTFDALEKAWKNAKEKYQREHVTPYIYENPNLFKVFYLEPPEYLKREGIRLTIDTIKDFKLYLELQKHFDLINVDIRQIIDFLDKNPQIKNINSNVRQKSYREVEE.

This is an uncharacterized protein from Methanocaldococcus jannaschii (strain ATCC 43067 / DSM 2661 / JAL-1 / JCM 10045 / NBRC 100440) (Methanococcus jannaschii).